The following is a 173-amino-acid chain: NADH-ubiquinone oxidoreductase chain 6 (173 aa).

4 helical membrane passes run 24–44, 47–67, 81–101, and 142–162; these read AMGL…GMFV, FWFS…LFIY, MKLF…SFFF, and LITL…VKIT.

This sequence belongs to the complex I subunit 6 family.

Its subcellular location is the mitochondrion membrane. It catalyses the reaction a ubiquinone + NADH + 5 H(+)(in) = a ubiquinol + NAD(+) + 4 H(+)(out). Functionally, core subunit of the mitochondrial membrane respiratory chain NADH dehydrogenase (Complex I) that is believed to belong to the minimal assembly required for catalysis. Complex I functions in the transfer of electrons from NADH to the respiratory chain. The immediate electron acceptor for the enzyme is believed to be ubiquinone. The chain is NADH-ubiquinone oxidoreductase chain 6 from Aedes aegypti (Yellowfever mosquito).